We begin with the raw amino-acid sequence, 352 residues long: Photosystem II D2 protein (352 aa).

A helical transmembrane segment spans residues 40-60 (CAYLALGGWLTGTSFVTSWYT). H117 contributes to the chlorophyll a binding site. Residues 124 to 140 (GFMLRQFEIARLVGVRP) traverse the membrane as a helical segment. 2 residues coordinate pheophytin a: Q129 and N142. Residues 152-165 (VFVSVFLMYPLGQS) form a helical membrane-spanning segment. H197 is a chlorophyll a binding site. The chain crosses the membrane as a helical span at residues 207–227 (GALLCAIHGATVENTLFEDSE). Residues H214 and F261 each coordinate a plastoquinone. H214 is a Fe cation binding site. H268 contacts Fe cation. A helical membrane pass occupies residues 278–294 (GLWMSSIGIVGLALNLR).

Belongs to the reaction center PufL/M/PsbA/D family. PSII is composed of 1 copy each of membrane proteins PsbA, PsbB, PsbC, PsbD, PsbE, PsbF, PsbH, PsbI, PsbJ, PsbK, PsbL, PsbM, PsbT, PsbX, PsbY, PsbZ, Psb30/Ycf12, peripheral proteins PsbO, CyanoQ (PsbQ), PsbU, PsbV and a large number of cofactors. It forms dimeric complexes. Requires The D1/D2 heterodimer binds P680, chlorophylls that are the primary electron donor of PSII, and subsequent electron acceptors. It shares a non-heme iron and each subunit binds pheophytin, quinone, additional chlorophylls, carotenoids and lipids. There is also a Cl(-1) ion associated with D1 and D2, which is required for oxygen evolution. The PSII complex binds additional chlorophylls, carotenoids and specific lipids. as cofactor.

Its subcellular location is the cellular thylakoid membrane. It carries out the reaction 2 a plastoquinone + 4 hnu + 2 H2O = 2 a plastoquinol + O2. Photosystem II (PSII) is a light-driven water:plastoquinone oxidoreductase that uses light energy to abstract electrons from H(2)O, generating O(2) and a proton gradient subsequently used for ATP formation. It consists of a core antenna complex that captures photons, and an electron transfer chain that converts photonic excitation into a charge separation. The D1/D2 (PsbA/PsbD) reaction center heterodimer binds P680, the primary electron donor of PSII as well as several subsequent electron acceptors. D2 is needed for assembly of a stable PSII complex. The protein is Photosystem II D2 protein of Synechococcus elongatus (strain ATCC 33912 / PCC 7942 / FACHB-805) (Anacystis nidulans R2).